Consider the following 427-residue polypeptide: Adenylosuccinate synthetase (427 aa).

Residues G12–K18 and G40–T42 contribute to the GTP site. D13 acts as the Proton acceptor in catalysis. Residues D13 and G40 each contribute to the Mg(2+) site. Residues D13 to K16, N38 to H41, T130, R144, Q224, T239, and R303 contribute to the IMP site. H41 (proton donor) is an active-site residue. Residue V299–R305 participates in substrate binding. GTP contacts are provided by residues R305, K331–D333, and S413–G415.

This sequence belongs to the adenylosuccinate synthetase family. As to quaternary structure, homodimer. Requires Mg(2+) as cofactor.

It is found in the cytoplasm. The catalysed reaction is IMP + L-aspartate + GTP = N(6)-(1,2-dicarboxyethyl)-AMP + GDP + phosphate + 2 H(+). Its pathway is purine metabolism; AMP biosynthesis via de novo pathway; AMP from IMP: step 1/2. Plays an important role in the de novo pathway of purine nucleotide biosynthesis. Catalyzes the first committed step in the biosynthesis of AMP from IMP. In Clostridium novyi (strain NT), this protein is Adenylosuccinate synthetase.